The chain runs to 97 residues: U-reduvitoxin-Pr10a (97 aa).

The N-terminal stretch at 1 to 18 is a signal peptide; that stretch reads MKTALFLVFALAFIAVEG. Pacifastin domains follow at residues 22 to 59 and 62 to 97; these read KACSKPGQTVLAPDGCNHCRCSKNGIIMGCTKKMCPPR and KQSCKPGATFKHKDGCNTCKCSDDGKSARCTARLCW. Cystine bridges form between Cys24/Cys42, Cys37/Cys56, and Cys40/Cys51. The pro-Pro-Arg motif necessary for proteolytic processing stretch occupies residues 57 to 59; it reads PPR. Disulfide bonds link Cys65-Cys82, Cys77-Cys96, and Cys80-Cys91.

This sequence belongs to the protease inhibitor I19 family. As to expression, expressed by the venom gland.

It is found in the secreted. In terms of biological role, inhibits trypsin activity and prophenoloxidase (PPO) activation, an enzyme essential for both clotting and insect innate immune responses. It does not inhibit activity of chymotrypsin and protease K, and has no effect on phenoloxidase (PO) activity. The polypeptide is U-reduvitoxin-Pr10a (Platymeris rhadamanthus (Red spot assassin bug)).